The following is a 305-amino-acid chain: Axin interactor, dorsalization-associated protein B (305 aa).

Residues 126–137 (ENLEVEEEEEDG) show a composition bias toward acidic residues. A disordered region spans residues 126 to 146 (ENLEVEEEEEDGGAGAGSPDL). An axin-binding region spans residues 153–220 (GTLLPRLPSE…RKEDTYVHFN (68 aa)). The C2 Aida-type domain maps to 156-303 (LPRLPSEPGM…LYLHLLQTLL (148 aa)).

This sequence belongs to the AIDA family.

Functionally, acts as a ventralizing factor during embryogenesis. Inhibits axin-mediated JNK activation by binding axin and disrupting axin homodimerization. This in turn antagonizes a Wnt/beta-catenin-independent dorsalization pathway activated by axin/JNK-signaling. This Xenopus laevis (African clawed frog) protein is Axin interactor, dorsalization-associated protein B (aida-b).